The primary structure comprises 288 residues: MKKLSFQQIILTLQNYWQDYGCAILQPYDAHVGAGTFHPATVLRCLGTKPWSVAYVQPSRRPGDSRYGMHPNRMQHYYQFQVILKPSPDNIQELYLKSLECLGIDLKIHDIRFVEDDWESPTLGAAGLGWEVWCNGMEVSQFTYMQQIGGIECRPVAGEITYGLDRLALYIQGVDEVRELDWNGQVGEKALKYGEVDFEAERQFSKYNLELADSEMLLRHFKDSEDQCERLIKANLPMPAYDECLKASHAFNQLNALGVISVTERASYVLRVRHLARICCTKWLEMNK.

Belongs to the class-II aminoacyl-tRNA synthetase family. As to quaternary structure, tetramer of two alpha and two beta subunits.

It localises to the cytoplasm. It carries out the reaction tRNA(Gly) + glycine + ATP = glycyl-tRNA(Gly) + AMP + diphosphate. In Rickettsia massiliae (strain Mtu5), this protein is Glycine--tRNA ligase alpha subunit.